Reading from the N-terminus, the 491-residue chain is Glutamyl-tRNA(Gln) amidotransferase subunit A (491 aa).

Residues Lys77 and Ser152 each act as charge relay system in the active site. Residue Ser176 is the Acyl-ester intermediate of the active site.

Belongs to the amidase family. GatA subfamily. In terms of assembly, heterotrimer of A, B and C subunits.

It catalyses the reaction L-glutamyl-tRNA(Gln) + L-glutamine + ATP + H2O = L-glutaminyl-tRNA(Gln) + L-glutamate + ADP + phosphate + H(+). In terms of biological role, allows the formation of correctly charged Gln-tRNA(Gln) through the transamidation of misacylated Glu-tRNA(Gln) in organisms which lack glutaminyl-tRNA synthetase. The reaction takes place in the presence of glutamine and ATP through an activated gamma-phospho-Glu-tRNA(Gln). The protein is Glutamyl-tRNA(Gln) amidotransferase subunit A of Chlamydia trachomatis serovar L2 (strain ATCC VR-902B / DSM 19102 / 434/Bu).